Reading from the N-terminus, the 380-residue chain is 4-hydroxy-3-methylbut-2-en-1-yl diphosphate synthase (flavodoxin) (380 aa).

Cys-280, Cys-283, Cys-315, and Glu-322 together coordinate [4Fe-4S] cluster.

The protein belongs to the IspG family. It depends on [4Fe-4S] cluster as a cofactor.

It catalyses the reaction (2E)-4-hydroxy-3-methylbut-2-enyl diphosphate + oxidized [flavodoxin] + H2O + 2 H(+) = 2-C-methyl-D-erythritol 2,4-cyclic diphosphate + reduced [flavodoxin]. Its pathway is isoprenoid biosynthesis; isopentenyl diphosphate biosynthesis via DXP pathway; isopentenyl diphosphate from 1-deoxy-D-xylulose 5-phosphate: step 5/6. Converts 2C-methyl-D-erythritol 2,4-cyclodiphosphate (ME-2,4cPP) into 1-hydroxy-2-methyl-2-(E)-butenyl 4-diphosphate. This chain is 4-hydroxy-3-methylbut-2-en-1-yl diphosphate synthase (flavodoxin), found in Cutibacterium acnes (strain DSM 16379 / KPA171202) (Propionibacterium acnes).